The primary structure comprises 187 residues: ATP synthase subunit b 2 (187 aa).

Residues 32-52 (TTFAAQILWLAIAFGLLYYLM) traverse the membrane as a helical segment.

This sequence belongs to the ATPase B chain family. In terms of assembly, F-type ATPases have 2 components, F(1) - the catalytic core - and F(0) - the membrane proton channel. F(1) has five subunits: alpha(3), beta(3), gamma(1), delta(1), epsilon(1). F(0) has three main subunits: a(1), b(2) and c(10-14). The alpha and beta chains form an alternating ring which encloses part of the gamma chain. F(1) is attached to F(0) by a central stalk formed by the gamma and epsilon chains, while a peripheral stalk is formed by the delta and b chains.

Its subcellular location is the cell inner membrane. Its function is as follows. F(1)F(0) ATP synthase produces ATP from ADP in the presence of a proton or sodium gradient. F-type ATPases consist of two structural domains, F(1) containing the extramembraneous catalytic core and F(0) containing the membrane proton channel, linked together by a central stalk and a peripheral stalk. During catalysis, ATP synthesis in the catalytic domain of F(1) is coupled via a rotary mechanism of the central stalk subunits to proton translocation. Component of the F(0) channel, it forms part of the peripheral stalk, linking F(1) to F(0). The b'-subunit is a diverged and duplicated form of b found in plants and photosynthetic bacteria. This is ATP synthase subunit b 2 (atpF2) from Methylobacterium sp. (strain 4-46).